The sequence spans 426 residues: Glutamate-1-semialdehyde 2,1-aminomutase (426 aa).

An N6-(pyridoxal phosphate)lysine modification is found at lysine 265.

It belongs to the class-III pyridoxal-phosphate-dependent aminotransferase family. HemL subfamily. In terms of assembly, homodimer. Requires pyridoxal 5'-phosphate as cofactor.

The protein localises to the cytoplasm. It carries out the reaction (S)-4-amino-5-oxopentanoate = 5-aminolevulinate. Its pathway is porphyrin-containing compound metabolism; protoporphyrin-IX biosynthesis; 5-aminolevulinate from L-glutamyl-tRNA(Glu): step 2/2. The polypeptide is Glutamate-1-semialdehyde 2,1-aminomutase (Salmonella choleraesuis (strain SC-B67)).